A 287-amino-acid chain; its full sequence is 3-methyl-2-oxobutanoate hydroxymethyltransferase (287 aa).

Mg(2+) contacts are provided by D67 and D106. 3-methyl-2-oxobutanoate-binding positions include 67 to 68 (DS), D106, and K136. E138 is a Mg(2+) binding site. The active-site Proton acceptor is the E204.

Belongs to the PanB family. As to quaternary structure, homodecamer; pentamer of dimers. Mg(2+) serves as cofactor.

It localises to the cytoplasm. It carries out the reaction 3-methyl-2-oxobutanoate + (6R)-5,10-methylene-5,6,7,8-tetrahydrofolate + H2O = 2-dehydropantoate + (6S)-5,6,7,8-tetrahydrofolate. It participates in cofactor biosynthesis; (R)-pantothenate biosynthesis; (R)-pantoate from 3-methyl-2-oxobutanoate: step 1/2. Functionally, catalyzes the reversible reaction in which hydroxymethyl group from 5,10-methylenetetrahydrofolate is transferred onto alpha-ketoisovalerate to form ketopantoate. The sequence is that of 3-methyl-2-oxobutanoate hydroxymethyltransferase from Streptomyces avermitilis (strain ATCC 31267 / DSM 46492 / JCM 5070 / NBRC 14893 / NCIMB 12804 / NRRL 8165 / MA-4680).